We begin with the raw amino-acid sequence, 877 residues long: MADDGMLMNFEIGDVPIVAKQAFKGGRWKDRLAAKKTAQHRVTKSTNKPSAREIFSEPQHDTSAEEYIGREASSRAPKRQRVDDNYNSYGGRNENTAAYASGKLPSGSINVGGGRKTTFQEEPRTAFVAGKLPPGSINIGGKKATQIEDEGRAAYASGKLPPGSINSGAKKAISFQDETRPAYVSGKLPHGSIDGMRNREMAAVHREIAEGGRKPGQVVSSLFTFNPTSKKTFDEPEEQAEPAKPSNAPLTEEMATFTNLGLSRRLAAHLSTKLDMKAPTAIQKASVQQLVSDDSDAFIQAETGSGKTLAYLLPIVERILALSENGVQIHRDSGLFAIILSPTRELCKQIAAVLEKVLRCAPWIVGTTVNGGESKQSEKARLRKGVNILVATPGRLADHLDNTEVLNVATVRWLVLDEGDRLMELGFEEEIKGIVEKIGRRSVAKANSDMGSLPKRRVTILCSATMKMNVQRLGEISLKDAVHIQADPSEQEKQDKENGVEAQDKAFSAPTQLKQSYAIVPAKLRLVTLTALLKRAFARKGSVMKAIVFISCADSVDFHFSLFSRTPEASAEVVDEEKVDLPALPKSELVKETIAHGTTISNNSNPVILHKLHGSLAQNIRTATLKAFSESADPCVMICTDVASRGLDLPNVDFVIEYDPPFSAEDHLHRVGRTARAGREGRALIFLMPGVEEEYVSILASGYREGKKALTRHTAEDLIQKGFGGIGREWEERATNFQLEVERWSLDSPKYLEMARRGYQSHIRAYATHVANERHIFNMQELHLGHLAKAFALRDKPGSIKVPGLRPAKMTKADRSVAARKAKRGEKAEDKAPEGERVRKQKKMELDLPTVDGNEAAARMKRKMKEHMAAASEFNIG.

Residues 34–101 (AKKTAQHRVT…RNENTAAYAS (68 aa)) form a disordered region. The segment covering 50 to 73 (SAREIFSEPQHDTSAEEYIGREAS) has biased composition (basic and acidic residues). Residues 85 to 98 (NYNSYGGRNENTAA) are compositionally biased toward polar residues. The Q motif signature appears at 255-284 (ATFTNLGLSRRLAAHLSTKLDMKAPTAIQK). The Helicase ATP-binding domain maps to 288–484 (QQLVSDDSDA…EISLKDAVHI (197 aa)). An ATP-binding site is contributed by 301–308 (AETGSGKT). Positions 417–420 (DEGD) match the DEAD box motif. The Helicase C-terminal domain occupies 512-719 (QLKQSYAIVP…LTRHTAEDLI (208 aa)). Positions 814-845 (DRSVAARKAKRGEKAEDKAPEGERVRKQKKME) are disordered. Positions 825–845 (GEKAEDKAPEGERVRKQKKME) are enriched in basic and acidic residues.

Belongs to the DEAD box helicase family. DDX31/DBP7 subfamily.

It localises to the nucleus. The protein localises to the nucleolus. It catalyses the reaction ATP + H2O = ADP + phosphate + H(+). In terms of biological role, ATP-binding RNA helicase involved in the biogenesis of 60S ribosomal subunits and is required for the normal formation of 25S and 5.8S rRNAs. The protein is ATP-dependent RNA helicase dbp7 (dbp7) of Botryotinia fuckeliana (strain B05.10) (Noble rot fungus).